A 333-amino-acid chain; its full sequence is MIDTTLPLTDIHRHLDGNIRPQTILELGRQYNISLPAQSLETLIPHVQVIANEPDLVSFLTKLDWGVKVLASLDACRRVAFENIEDAARHGLHYVELRFSPGYMAMAHQLPVAGVVEAVIDGVREGCRTFGVQAKLIGIMSRTFGEAACQQELEAFLAHRDQITALDLAGDELGFPGSLFLSHFNRARDAGWHITVHAGEAAGPESIWQAIRELGAERIGHGVKAIEDRALMDFLAEQQIGIESCLTSNIQTSTVAELAAHPLKTFLEHGIRASINTDDPGVQGVDIIHEYTVAAPAAGLSREQIRQAQINGLEMAFLSAEEKRALREKVAAK.

Zn(2+) contacts are provided by His12 and His14. Substrate-binding residues include His14, Asp16, and Gly170. His197 serves as a coordination point for Zn(2+). The active-site Proton donor is the Glu200. Asp278 contacts Zn(2+). Asp279 provides a ligand contact to substrate.

Belongs to the metallo-dependent hydrolases superfamily. Adenosine and AMP deaminases family. Adenosine deaminase subfamily. It depends on Zn(2+) as a cofactor.

The catalysed reaction is adenosine + H2O + H(+) = inosine + NH4(+). It carries out the reaction 2'-deoxyadenosine + H2O + H(+) = 2'-deoxyinosine + NH4(+). Catalyzes the hydrolytic deamination of adenosine and 2-deoxyadenosine. The polypeptide is Adenosine deaminase (Escherichia coli O139:H28 (strain E24377A / ETEC)).